Reading from the N-terminus, the 220-residue chain is Probable L-serine dehydratase, beta chain (220 aa).

An ACT domain is found at 148-220; the sequence is AILVVHNDKF…NIIQVTKIAD (73 aa).

This sequence belongs to the iron-sulfur dependent L-serine dehydratase family. As to quaternary structure, heterodimer of an alpha chain and a beta chain. It depends on [4Fe-4S] cluster as a cofactor.

The catalysed reaction is L-serine = pyruvate + NH4(+). Its pathway is carbohydrate biosynthesis; gluconeogenesis. The polypeptide is Probable L-serine dehydratase, beta chain (sdaAB) (Bacillus subtilis (strain 168)).